Here is a 287-residue protein sequence, read N- to C-terminus: Ribonuclease Z (287 aa).

Zn(2+) contacts are provided by H64, H66, D68, H69, H124, D191, and H250. D68 functions as the Proton acceptor in the catalytic mechanism.

Belongs to the RNase Z family. In terms of assembly, homodimer. Zn(2+) is required as a cofactor.

It catalyses the reaction Endonucleolytic cleavage of RNA, removing extra 3' nucleotides from tRNA precursor, generating 3' termini of tRNAs. A 3'-hydroxy group is left at the tRNA terminus and a 5'-phosphoryl group is left at the trailer molecule.. Zinc phosphodiesterase, which displays some tRNA 3'-processing endonuclease activity. Probably involved in tRNA maturation, by removing a 3'-trailer from precursor tRNA. The sequence is that of Ribonuclease Z from Pyrobaculum islandicum (strain DSM 4184 / JCM 9189 / GEO3).